Reading from the N-terminus, the 328-residue chain is Aspartate carbamoyltransferase catalytic subunit (328 aa).

Positions 70 and 71 each coordinate carbamoyl phosphate. Residue K98 coordinates L-aspartate. 3 residues coordinate carbamoyl phosphate: R120, H150, and Q153. L-aspartate-binding residues include R183 and R238. Residues G279 and P280 each coordinate carbamoyl phosphate.

This sequence belongs to the aspartate/ornithine carbamoyltransferase superfamily. ATCase family. Heterododecamer (2C3:3R2) of six catalytic PyrB chains organized as two trimers (C3), and six regulatory PyrI chains organized as three dimers (R2).

It carries out the reaction carbamoyl phosphate + L-aspartate = N-carbamoyl-L-aspartate + phosphate + H(+). It functions in the pathway pyrimidine metabolism; UMP biosynthesis via de novo pathway; (S)-dihydroorotate from bicarbonate: step 2/3. In terms of biological role, catalyzes the condensation of carbamoyl phosphate and aspartate to form carbamoyl aspartate and inorganic phosphate, the committed step in the de novo pyrimidine nucleotide biosynthesis pathway. The protein is Aspartate carbamoyltransferase catalytic subunit of Methylococcus capsulatus (strain ATCC 33009 / NCIMB 11132 / Bath).